The primary structure comprises 309 residues: Porphobilinogen deaminase (309 aa).

Cysteine 241 carries the S-(dipyrrolylmethanemethyl)cysteine modification.

The protein belongs to the HMBS family. Monomer. Dipyrromethane is required as a cofactor.

The enzyme catalyses 4 porphobilinogen + H2O = hydroxymethylbilane + 4 NH4(+). It functions in the pathway porphyrin-containing compound metabolism; protoporphyrin-IX biosynthesis; coproporphyrinogen-III from 5-aminolevulinate: step 2/4. Its function is as follows. Tetrapolymerization of the monopyrrole PBG into the hydroxymethylbilane pre-uroporphyrinogen in several discrete steps. This is Porphobilinogen deaminase from Bacillus cereus (strain AH820).